Reading from the N-terminus, the 449-residue chain is N-succinylarginine dihydrolase (449 aa).

Residues 19-28 (GGLSYGNVAS), Asn110, and 137-138 (HR) contribute to the substrate site. The disordered stretch occupies residues 23–43 (YGNVASQSNSQQGSNPREAAR). Polar residues predominate over residues 25-37 (NVASQSNSQQGSN). The active site involves Glu174. Substrate is bound at residue Arg214. Residue His250 is part of the active site. 2 residues coordinate substrate: Asp252 and Asn365. Cys371 functions as the Nucleophile in the catalytic mechanism.

This sequence belongs to the succinylarginine dihydrolase family. Homodimer.

It carries out the reaction N(2)-succinyl-L-arginine + 2 H2O + 2 H(+) = N(2)-succinyl-L-ornithine + 2 NH4(+) + CO2. The protein operates within amino-acid degradation; L-arginine degradation via AST pathway; L-glutamate and succinate from L-arginine: step 2/5. Catalyzes the hydrolysis of N(2)-succinylarginine into N(2)-succinylornithine, ammonia and CO(2). This chain is N-succinylarginine dihydrolase, found in Pseudomonas entomophila (strain L48).